Here is a 617-residue protein sequence, read N- to C-terminus: V-type proton ATPase catalytic subunit A (617 aa).

250–257 (GAFGCGKT) contributes to the ATP binding site. Ser-384 is subject to Phosphoserine; by AMPK.

Belongs to the ATPase alpha/beta chains family. V-ATPase is a heteromultimeric enzyme made up of two complexes: the ATP-hydrolytic V1 complex and the proton translocation V0 complex. The V1 complex consists of three catalytic AB heterodimers that form a heterohexamer, three peripheral stalks each consisting of EG heterodimers, one central rotor including subunits D and F, and the regulatory subunits C and H. The proton translocation complex V0 consists of the proton transport subunit a, a ring of proteolipid subunits c9c'', rotary subunit d, subunits e and f, and the accessory subunits ATP6AP1/Ac45 and ATP6AP2/PRR. Interacts with the V0 complex V-ATPase subunit a4 ATP6V0A4. Interacts with WFS1. Interacts with alpha-crystallin B chain/CRYAB and with MTOR, forming a ternary complex. Post-translationally, phosphorylation at Ser-384 by AMPK down-regulates its enzyme activity.

The protein localises to the cytoplasm. Its subcellular location is the cytosol. It is found in the cytoplasmic vesicle. The protein resides in the secretory vesicle. It localises to the clathrin-coated vesicle membrane. The protein localises to the lysosome. The catalysed reaction is ATP + H2O + 4 H(+)(in) = ADP + phosphate + 5 H(+)(out). ATP hydrolysis occurs at the interface between the nucleotide-binding domains of subunits A and B. ATP hydrolysis triggers a conformational change in the subunits D and F, which induces a shift of subunit d. The c-ring is subsequently rotated and results in a continuous proton translocation across the membrane. Catalytic subunit of the V1 complex of vacuolar(H+)-ATPase (V-ATPase), a multisubunit enzyme composed of a peripheral complex (V1) that hydrolyzes ATP and a membrane integral complex (V0) that translocates protons. V-ATPase is responsible for acidifying and maintaining the pH of intracellular compartments and in some cell types, is targeted to the plasma membrane, where it is responsible for acidifying the extracellular environment. In aerobic conditions, involved in intracellular iron homeostasis, thus triggering the activity of Fe(2+) prolyl hydroxylase (PHD) enzymes, and leading to HIF1A hydroxylation and subsequent proteasomal degradation. May play a role in neurite development and synaptic connectivity. The sequence is that of V-type proton ATPase catalytic subunit A (Atp6v1a) from Mus musculus (Mouse).